The sequence spans 469 residues: 3-isopropylmalate dehydratase large subunit (469 aa).

The [4Fe-4S] cluster site is built by Cys347, Cys408, and Cys411.

It belongs to the aconitase/IPM isomerase family. LeuC type 1 subfamily. As to quaternary structure, heterodimer of LeuC and LeuD. [4Fe-4S] cluster serves as cofactor.

The catalysed reaction is (2R,3S)-3-isopropylmalate = (2S)-2-isopropylmalate. It functions in the pathway amino-acid biosynthesis; L-leucine biosynthesis; L-leucine from 3-methyl-2-oxobutanoate: step 2/4. Catalyzes the isomerization between 2-isopropylmalate and 3-isopropylmalate, via the formation of 2-isopropylmaleate. This is 3-isopropylmalate dehydratase large subunit from Haemophilus influenzae (strain 86-028NP).